The following is a 471-amino-acid chain: tRNA-2-methylthio-N(6)-dimethylallyladenosine synthase (471 aa).

The region spanning Lys36–Thr154 is the MTTase N-terminal domain. Residues Cys45, Cys81, Cys115, Cys191, Cys195, and Cys198 each contribute to the [4Fe-4S] cluster site. The region spanning Arg177–Lys407 is the Radical SAM core domain. The TRAM domain maps to Gln410 to Ile471.

It belongs to the methylthiotransferase family. MiaB subfamily. Monomer. Requires [4Fe-4S] cluster as cofactor.

It localises to the cytoplasm. It carries out the reaction N(6)-dimethylallyladenosine(37) in tRNA + (sulfur carrier)-SH + AH2 + 2 S-adenosyl-L-methionine = 2-methylsulfanyl-N(6)-dimethylallyladenosine(37) in tRNA + (sulfur carrier)-H + 5'-deoxyadenosine + L-methionine + A + S-adenosyl-L-homocysteine + 2 H(+). Functionally, catalyzes the methylthiolation of N6-(dimethylallyl)adenosine (i(6)A), leading to the formation of 2-methylthio-N6-(dimethylallyl)adenosine (ms(2)i(6)A) at position 37 in tRNAs that read codons beginning with uridine. The sequence is that of tRNA-2-methylthio-N(6)-dimethylallyladenosine synthase from Caldicellulosiruptor saccharolyticus (strain ATCC 43494 / DSM 8903 / Tp8T 6331).